An 80-amino-acid chain; its full sequence is uncharacterized protein (80 aa).

This is an uncharacterized protein from Escherichia coli (Bacteriophage T4).